A 233-amino-acid polypeptide reads, in one-letter code: 5'-methylthioadenosine/S-adenosylhomocysteine nucleosidase (233 aa).

Glutamate 12 acts as the Proton acceptor in catalysis. Residues glycine 78, isoleucine 152, and 173–174 (ME) contribute to the substrate site. The Proton donor role is filled by aspartate 197.

This sequence belongs to the PNP/UDP phosphorylase family. MtnN subfamily. In terms of assembly, homodimer.

It carries out the reaction S-adenosyl-L-homocysteine + H2O = S-(5-deoxy-D-ribos-5-yl)-L-homocysteine + adenine. It catalyses the reaction S-methyl-5'-thioadenosine + H2O = 5-(methylsulfanyl)-D-ribose + adenine. The catalysed reaction is 5'-deoxyadenosine + H2O = 5-deoxy-D-ribose + adenine. It participates in amino-acid biosynthesis; L-methionine biosynthesis via salvage pathway; S-methyl-5-thio-alpha-D-ribose 1-phosphate from S-methyl-5'-thioadenosine (hydrolase route): step 1/2. Functionally, catalyzes the irreversible cleavage of the glycosidic bond in both 5'-methylthioadenosine (MTA) and S-adenosylhomocysteine (SAH/AdoHcy) to adenine and the corresponding thioribose, 5'-methylthioribose and S-ribosylhomocysteine, respectively. Also cleaves 5'-deoxyadenosine, a toxic by-product of radical S-adenosylmethionine (SAM) enzymes, into 5-deoxyribose and adenine. Thus, is required for in vivo function of the radical SAM enzymes biotin synthase and lipoic acid synthase, that are inhibited by 5'-deoxyadenosine accumulation. In Yersinia pseudotuberculosis serotype O:1b (strain IP 31758), this protein is 5'-methylthioadenosine/S-adenosylhomocysteine nucleosidase.